The primary structure comprises 271 residues: Putative phosphoenolpyruvate synthase regulatory protein (271 aa).

An ADP-binding site is contributed by 152–159 (GVSRSGKT).

Belongs to the pyruvate, phosphate/water dikinase regulatory protein family. PSRP subfamily.

The catalysed reaction is [pyruvate, water dikinase] + ADP = [pyruvate, water dikinase]-phosphate + AMP + H(+). The enzyme catalyses [pyruvate, water dikinase]-phosphate + phosphate + H(+) = [pyruvate, water dikinase] + diphosphate. In terms of biological role, bifunctional serine/threonine kinase and phosphorylase involved in the regulation of the phosphoenolpyruvate synthase (PEPS) by catalyzing its phosphorylation/dephosphorylation. The sequence is that of Putative phosphoenolpyruvate synthase regulatory protein from Thiocapsa roseopersicina.